We begin with the raw amino-acid sequence, 35 residues long: Cupiennin-2b (35 aa).

Gln35 bears the Glutamine amide mark.

As to expression, expressed by the venom gland.

The protein localises to the secreted. In Cupiennius salei (American wandering spider), this protein is Cupiennin-2b.